Here is a 1060-residue protein sequence, read N- to C-terminus: Desmoglein-1-beta (1060 aa).

Residues 1 to 23 form the signal peptide; sequence MDWHSFRIAALLLTSLVVLEVNS. A propeptide spanning residues 24–49 is cleaved from the precursor; it reads EFQIQVRDHNAKNGTIKWHSIRRQKR. Cadherin domains are found at residues 50 to 157, 158 to 269, 270 to 389, and 386 to 493; these read EWIK…PPVF, SMTT…IPYL, EQSS…RPGS, and RPGS…PGSD. Topologically, residues 50–567 are extracellular; that stretch reads EWIKFAAACR…ITEDNVHFGP (518 aa). N-linked (GlcNAc...) (high mannose) asparagine glycosylation occurs at N110. N180 carries N-linked (GlcNAc...) asparagine glycosylation. The tract at residues 490 to 560 is disordered; it reads PGSDGGGSSS…PEPEPFDITE (71 aa). The segment covering 492-503 has biased composition (gly residues); the sequence is SDGGGSSSGSGG. The segment covering 510–519 has biased composition (polar residues); the sequence is NGYQGTSTVG. Over residues 525-537 the composition is skewed to gly residues; sequence GSGGVTSSGGGSG. Acidic residues predominate over residues 549–560; sequence DEPEPEPFDITE. Residues 568–588 traverse the membrane as a helical segment; it reads AGIGLLIMGFLVLGLVPFLLI. Over 589–1060 the chain is Cytoplasmic; sequence CCDCGGAPGG…TKYSTVQYSK (472 aa). Residues 792-801 are compositionally biased toward low complexity; sequence PDPDSSWPPQ. Positions 792–811 are disordered; sequence PDPDSSWPPQSTEPMCPQST. 5 Desmoglein repeat repeats span residues 835 to 861, 862 to 891, 892 to 921, 922 to 949, and 950 to 978; these read AYPSGPGVQHPLPIPDPLGYGNVTVRE, SYATSGTLKPSVHFHDNQQASNVVVTERVV, GPVPGADLHGMLEIPDLRDGTNVIVTERVI, APGSSLPTSLTIPNPRETSNVVVTERVI, and QPTSGMIGNLSMTPELSSAQNVIVTERVV.

As to quaternary structure, interacts with DSC3; there is evidence to suggest that the interaction promotes cell-cell adhesion of keratinocytes. As to expression, expressed in epidermis.

It localises to the cell membrane. The protein resides in the cell junction. Its subcellular location is the desmosome. It is found in the cytoplasm. The protein localises to the nucleus. Functionally, component of intercellular desmosome junctions. Involved in the interaction of plaque proteins and intermediate filaments mediating cell-cell adhesion. The chain is Desmoglein-1-beta (Dsg1b) from Mus musculus (Mouse).